Consider the following 260-residue polypeptide: DNA repair protein RecO (260 aa).

It belongs to the RecO family.

Its function is as follows. Involved in DNA repair and RecF pathway recombination. The sequence is that of DNA repair protein RecO from Salinibacter ruber (strain DSM 13855 / M31).